A 317-amino-acid chain; its full sequence is Beta-ketoacyl-[acyl-carrier-protein] synthase III (317 aa).

Active-site residues include C112 and H244. The interval 245 to 249 (QANLR) is ACP-binding. The active site involves N274.

Belongs to the thiolase-like superfamily. FabH family. Homodimer.

Its subcellular location is the cytoplasm. It catalyses the reaction malonyl-[ACP] + acetyl-CoA + H(+) = 3-oxobutanoyl-[ACP] + CO2 + CoA. The protein operates within lipid metabolism; fatty acid biosynthesis. Functionally, catalyzes the condensation reaction of fatty acid synthesis by the addition to an acyl acceptor of two carbons from malonyl-ACP. Catalyzes the first condensation reaction which initiates fatty acid synthesis and may therefore play a role in governing the total rate of fatty acid production. Possesses both acetoacetyl-ACP synthase and acetyl transacylase activities. Its substrate specificity determines the biosynthesis of branched-chain and/or straight-chain of fatty acids. This chain is Beta-ketoacyl-[acyl-carrier-protein] synthase III, found in Shigella sonnei (strain Ss046).